A 215-amino-acid chain; its full sequence is Histone-like protein 18C (215 aa).

Residues C140–M215 form a disordered region. 2 stretches are compositionally biased toward basic residues: residues S149 to K190 and A197 to M215.

Functionally, not known. Encoded in the intron of cAMP-dependent protein kinase regulatory chain type I. The protein is Histone-like protein 18C (Mst77F) of Drosophila melanogaster (Fruit fly).